Here is a 206-residue protein sequence, read N- to C-terminus: Thiamine-phosphate synthase (206 aa).

4-amino-2-methyl-5-(diphosphooxymethyl)pyrimidine-binding positions include 38-42 (QLREK) and N70. Residues D71 and D90 each coordinate Mg(2+). T109 is a 4-amino-2-methyl-5-(diphosphooxymethyl)pyrimidine binding site. Residue 135–137 (TST) participates in 2-[(2R,5Z)-2-carboxy-4-methylthiazol-5(2H)-ylidene]ethyl phosphate binding. K138 is a 4-amino-2-methyl-5-(diphosphooxymethyl)pyrimidine binding site. Residues G165 and 185–186 (VS) contribute to the 2-[(2R,5Z)-2-carboxy-4-methylthiazol-5(2H)-ylidene]ethyl phosphate site.

It belongs to the thiamine-phosphate synthase family. Mg(2+) serves as cofactor.

The enzyme catalyses 2-[(2R,5Z)-2-carboxy-4-methylthiazol-5(2H)-ylidene]ethyl phosphate + 4-amino-2-methyl-5-(diphosphooxymethyl)pyrimidine + 2 H(+) = thiamine phosphate + CO2 + diphosphate. The catalysed reaction is 2-(2-carboxy-4-methylthiazol-5-yl)ethyl phosphate + 4-amino-2-methyl-5-(diphosphooxymethyl)pyrimidine + 2 H(+) = thiamine phosphate + CO2 + diphosphate. It catalyses the reaction 4-methyl-5-(2-phosphooxyethyl)-thiazole + 4-amino-2-methyl-5-(diphosphooxymethyl)pyrimidine + H(+) = thiamine phosphate + diphosphate. Its pathway is cofactor biosynthesis; thiamine diphosphate biosynthesis; thiamine phosphate from 4-amino-2-methyl-5-diphosphomethylpyrimidine and 4-methyl-5-(2-phosphoethyl)-thiazole: step 1/1. Condenses 4-methyl-5-(beta-hydroxyethyl)thiazole monophosphate (THZ-P) and 2-methyl-4-amino-5-hydroxymethyl pyrimidine pyrophosphate (HMP-PP) to form thiamine monophosphate (TMP). The chain is Thiamine-phosphate synthase from Fusobacterium nucleatum subsp. nucleatum (strain ATCC 25586 / DSM 15643 / BCRC 10681 / CIP 101130 / JCM 8532 / KCTC 2640 / LMG 13131 / VPI 4355).